Here is a 75-residue protein sequence, read N- to C-terminus: Putative defensin-like protein 126 (75 aa).

The first 24 residues, 1 to 24 (MSKSTFLFVYIILILGSMVNEIQG), serve as a signal peptide directing secretion. Disulfide bonds link Cys29/Cys73, Cys38/Cys57, Cys43/Cys67, and Cys47/Cys69.

Belongs to the DEFL family.

The protein localises to the secreted. In Arabidopsis thaliana (Mouse-ear cress), this protein is Putative defensin-like protein 126 (LCR6).